A 341-amino-acid polypeptide reads, in one-letter code: UDP-3-O-acylglucosamine N-acyltransferase (341 aa).

Histidine 239 functions as the Proton acceptor in the catalytic mechanism.

This sequence belongs to the transferase hexapeptide repeat family. LpxD subfamily. Homotrimer.

The enzyme catalyses a UDP-3-O-[(3R)-3-hydroxyacyl]-alpha-D-glucosamine + a (3R)-hydroxyacyl-[ACP] = a UDP-2-N,3-O-bis[(3R)-3-hydroxyacyl]-alpha-D-glucosamine + holo-[ACP] + H(+). The protein operates within bacterial outer membrane biogenesis; LPS lipid A biosynthesis. Functionally, catalyzes the N-acylation of UDP-3-O-acylglucosamine using 3-hydroxyacyl-ACP as the acyl donor. Is involved in the biosynthesis of lipid A, a phosphorylated glycolipid that anchors the lipopolysaccharide to the outer membrane of the cell. This Idiomarina loihiensis (strain ATCC BAA-735 / DSM 15497 / L2-TR) protein is UDP-3-O-acylglucosamine N-acyltransferase.